The primary structure comprises 123 residues: Large ribosomal subunit protein bL12 (123 aa).

It belongs to the bacterial ribosomal protein bL12 family. Homodimer. Part of the ribosomal stalk of the 50S ribosomal subunit. Forms a multimeric L10(L12)X complex, where L10 forms an elongated spine to which 2 to 4 L12 dimers bind in a sequential fashion. Binds GTP-bound translation factors.

Forms part of the ribosomal stalk which helps the ribosome interact with GTP-bound translation factors. Is thus essential for accurate translation. The polypeptide is Large ribosomal subunit protein bL12 (Desulfotalea psychrophila (strain LSv54 / DSM 12343)).